The following is a 361-amino-acid chain: Gibberellin 20 oxidase 1-D (361 aa).

The 101-residue stretch at 199–299 (GNDSIMRLNY…RKSLAFFLCP (101 aa)) folds into the Fe2OG dioxygenase domain. Residues histidine 224, aspartate 226, and histidine 280 each coordinate Fe cation. Residue arginine 290 is part of the active site.

This sequence belongs to the iron/ascorbate-dependent oxidoreductase family. GA20OX subfamily. The cofactor is Fe cation. L-ascorbate serves as cofactor. As to expression, expressed in nodes and the ear of the elongating stem.

It carries out the reaction gibberellin A12 + 2 2-oxoglutarate + 3 O2 + H(+) = gibberellin A9 + 2 succinate + 3 CO2 + 2 H2O. The catalysed reaction is gibberellin A53 + 2 2-oxoglutarate + 3 O2 + H(+) = gibberellin A20 + 2 succinate + 3 CO2 + 2 H2O. In terms of biological role, key oxidase enzyme in the biosynthesis of gibberellin that catalyzes the conversion of GA12 and GA53 to GA9 and GA20 respectively, via a three-step oxidation at C-20 of the GA skeleton. The protein is Gibberellin 20 oxidase 1-D (GA20ox1D) of Triticum aestivum (Wheat).